Reading from the N-terminus, the 440-residue chain is 3-phosphoshikimate 1-carboxyvinyltransferase (440 aa).

Residues K25, S26, and R30 each coordinate 3-phosphoshikimate. K25 provides a ligand contact to phosphoenolpyruvate. Residues G96 and R124 each coordinate phosphoenolpyruvate. Positions 168, 169, 310, and 337 each coordinate 3-phosphoshikimate. Q169 is a binding site for phosphoenolpyruvate. D310 serves as the catalytic Proton acceptor. Phosphoenolpyruvate is bound by residues R341, R382, and K409.

Belongs to the EPSP synthase family. In terms of assembly, monomer.

It is found in the cytoplasm. It carries out the reaction 3-phosphoshikimate + phosphoenolpyruvate = 5-O-(1-carboxyvinyl)-3-phosphoshikimate + phosphate. Its pathway is metabolic intermediate biosynthesis; chorismate biosynthesis; chorismate from D-erythrose 4-phosphate and phosphoenolpyruvate: step 6/7. Catalyzes the transfer of the enolpyruvyl moiety of phosphoenolpyruvate (PEP) to the 5-hydroxyl of shikimate-3-phosphate (S3P) to produce enolpyruvyl shikimate-3-phosphate and inorganic phosphate. This is 3-phosphoshikimate 1-carboxyvinyltransferase from Chlamydia trachomatis serovar A (strain ATCC VR-571B / DSM 19440 / HAR-13).